The primary structure comprises 322 residues: MTLEQKGLKKQSITVAYFFDTIGKEHDIKLRRLNSVDEQKRRIFERDLHRPGLALAGFTNLFTYKRVQILGNTEMRFLNQHEEDARKNAFGNFVRFKIPCIILTSTNKLQPELLAMATEAGIPVFSTRHSSTKTMYLITEFLDNQFSLYQQYHGSMVDVYGVGVLLKGRSGLGKSEVALDLVERGHGLVADDVVVIHRKGESMILTAKRNKNIEHFMEIRGLGVVDVKANFGIRAIRDAKEVQVVVELLEWNKEMEYERLGLDTKTTKILGVEVPLVQLPIFPGKNITVIIEVVALNFLLKHYYDYVPAEALTKRIRTAIDQ.

Residues His-153 and Lys-174 contribute to the active site. Position 168–175 (168–175 (GRSGLGKS)) interacts with ATP. A Mg(2+)-binding site is contributed by Ser-175. Asp-192 serves as the catalytic Proton acceptor; for phosphorylation activity. Proton donor; for dephosphorylation activity. The segment at 217–226 (MEIRGLGVVD) is important for the catalytic mechanism of both phosphorylation and dephosphorylation. Glu-218 is a Mg(2+) binding site. The active site involves Arg-259. The interval 280–285 (PIFPGK) is important for the catalytic mechanism of dephosphorylation.

Belongs to the HPrK/P family. As to quaternary structure, homohexamer. It depends on Mg(2+) as a cofactor.

The enzyme catalyses [HPr protein]-L-serine + ATP = [HPr protein]-O-phospho-L-serine + ADP + H(+). The catalysed reaction is [HPr protein]-O-phospho-L-serine + phosphate + H(+) = [HPr protein]-L-serine + diphosphate. Catalyzes the ATP- as well as the pyrophosphate-dependent phosphorylation of a specific serine residue in HPr, a phosphocarrier protein of the phosphoenolpyruvate-dependent sugar phosphotransferase system (PTS). HprK/P also catalyzes the pyrophosphate-producing, inorganic phosphate-dependent dephosphorylation (phosphorolysis) of seryl-phosphorylated HPr (P-Ser-HPr). This chain is HPr kinase/phosphorylase, found in Chlorobium phaeobacteroides (strain DSM 266 / SMG 266 / 2430).